The sequence spans 371 residues: T-cell acute lymphocytic leukemia protein 1 (371 aa).

Positions 1–71 (MMEKRQPELC…DVPLQNSSNG (71 aa)) are disordered. The span at 34 to 57 (GCKEDEESKREEGDKEGGGRFKGD) shows a compositional bias: basic and acidic residues. Positions 204–256 (VRRIFTNSRERWRQQNVNGAFAELRKLIPTHPPDKKLSKNEILRLAMKYISFL) constitute a bHLH domain. The segment at 263–371 (QDGGRNVSST…GRPLDGSSRR (109 aa)) is disordered. A compositionally biased stretch (basic and acidic residues) spans 293-305 (HQDRVVGLARDDI). Over residues 321 to 335 (GDADGSPESFMEDQD) the composition is skewed to acidic residues.

Expressed in the main hemopoietic organs in adults, namely the kidney and the spleen. Also expressed in the liver, brain, gill and gonads.

Its subcellular location is the nucleus. Transcription factor that plays a pivotal role in hemopoietic and endothelial development. The sequence is that of T-cell acute lymphocytic leukemia protein 1 from Takifugu rubripes (Japanese pufferfish).